We begin with the raw amino-acid sequence, 261 residues long: NAD kinase (261 aa).

The active-site Proton acceptor is Asp-54. NAD(+) is bound by residues 54–55 (DG), 123–124 (ND), Arg-150, Asp-152, and 163–168 (TAYSLS).

Belongs to the NAD kinase family. A divalent metal cation serves as cofactor.

The protein resides in the cytoplasm. It carries out the reaction NAD(+) + ATP = ADP + NADP(+) + H(+). In terms of biological role, involved in the regulation of the intracellular balance of NAD and NADP, and is a key enzyme in the biosynthesis of NADP. Catalyzes specifically the phosphorylation on 2'-hydroxyl of the adenosine moiety of NAD to yield NADP. This chain is NAD kinase, found in Caldicellulosiruptor bescii (strain ATCC BAA-1888 / DSM 6725 / KCTC 15123 / Z-1320) (Anaerocellum thermophilum).